The primary structure comprises 139 residues: Holo-[acyl-carrier-protein] synthase (139 aa).

2 residues coordinate Mg(2+): aspartate 8 and glutamate 61.

This sequence belongs to the P-Pant transferase superfamily. AcpS family. Requires Mg(2+) as cofactor.

The protein resides in the cytoplasm. It carries out the reaction apo-[ACP] + CoA = holo-[ACP] + adenosine 3',5'-bisphosphate + H(+). Functionally, transfers the 4'-phosphopantetheine moiety from coenzyme A to a Ser of acyl-carrier-protein. The chain is Holo-[acyl-carrier-protein] synthase from Bradyrhizobium sp. (strain BTAi1 / ATCC BAA-1182).